A 715-amino-acid chain; its full sequence is Polyribonucleotide nucleotidyltransferase (715 aa).

Residues Asp-488 and Asp-494 each coordinate Mg(2+). The KH domain maps to 555-614; that stretch reads PRIEVMHIPTDKIRDVIGTGGKVIREIVEKTGAKINIEDDGTVKIASSNGKEIEAARKWI. Residues 624–692 enclose the S1 motif domain; sequence GEIYEGTVVK…ERGKVRLSMK (69 aa).

The protein belongs to the polyribonucleotide nucleotidyltransferase family. Requires Mg(2+) as cofactor.

The protein resides in the cytoplasm. The catalysed reaction is RNA(n+1) + phosphate = RNA(n) + a ribonucleoside 5'-diphosphate. Functionally, involved in mRNA degradation. Catalyzes the phosphorolysis of single-stranded polyribonucleotides processively in the 3'- to 5'-direction. The chain is Polyribonucleotide nucleotidyltransferase from Chelativorans sp. (strain BNC1).